The sequence spans 351 residues: Phosphoribosylformylglycinamidine cyclo-ligase (351 aa).

This sequence belongs to the AIR synthase family.

The protein localises to the cytoplasm. It carries out the reaction 2-formamido-N(1)-(5-O-phospho-beta-D-ribosyl)acetamidine + ATP = 5-amino-1-(5-phospho-beta-D-ribosyl)imidazole + ADP + phosphate + H(+). It functions in the pathway purine metabolism; IMP biosynthesis via de novo pathway; 5-amino-1-(5-phospho-D-ribosyl)imidazole from N(2)-formyl-N(1)-(5-phospho-D-ribosyl)glycinamide: step 2/2. The polypeptide is Phosphoribosylformylglycinamidine cyclo-ligase (Idiomarina loihiensis (strain ATCC BAA-735 / DSM 15497 / L2-TR)).